Consider the following 65-residue polypeptide: Large ribosomal subunit protein bL32 (65 aa).

Belongs to the bacterial ribosomal protein bL32 family.

In Phytoplasma australiense, this protein is Large ribosomal subunit protein bL32.